We begin with the raw amino-acid sequence, 360 residues long: Peptide chain release factor 1 (360 aa).

Gln-235 carries the N5-methylglutamine modification. The segment at 284 to 313 (AKRQQAEASTRRNLLGSGDRSDRNRTYNFP) is disordered.

Belongs to the prokaryotic/mitochondrial release factor family. Post-translationally, methylated by PrmC. Methylation increases the termination efficiency of RF1.

The protein resides in the cytoplasm. Peptide chain release factor 1 directs the termination of translation in response to the peptide chain termination codons UAG and UAA. In Citrobacter koseri (strain ATCC BAA-895 / CDC 4225-83 / SGSC4696), this protein is Peptide chain release factor 1.